A 339-amino-acid chain; its full sequence is Probable protein phosphatase 2C 28 (339 aa).

Residues 87–334 form the PPM-type phosphatase domain; that stretch reads DHGYHLVKGQ…DDISCVVVSF (248 aa). 4 residues coordinate Mn(2+): Asp-124, Gly-125, Asp-286, and Asp-325.

The protein belongs to the PP2C family. It depends on Mg(2+) as a cofactor. The cofactor is Mn(2+).

It carries out the reaction O-phospho-L-seryl-[protein] + H2O = L-seryl-[protein] + phosphate. The catalysed reaction is O-phospho-L-threonyl-[protein] + H2O = L-threonyl-[protein] + phosphate. This Arabidopsis thaliana (Mouse-ear cress) protein is Probable protein phosphatase 2C 28.